The following is a 395-amino-acid chain: Enolase (395 aa).

2 residues coordinate substrate: H136 and E145. Catalysis depends on E188, which acts as the Proton donor. Positions 223, 271, and 296 each coordinate Mg(2+). Positions 271 and 296 each coordinate substrate. K321 (proton acceptor) is an active-site residue. Residues 348 to 351 and K372 each bind substrate; that span reads SHRS.

The protein belongs to the enolase family. As to quaternary structure, homodimer. It depends on Mg(2+) as a cofactor.

The protein localises to the cytoplasm. The catalysed reaction is (2R)-2-phosphoglycerate = phosphoenolpyruvate + H2O. It participates in carbohydrate degradation; glycolysis; pyruvate from D-glyceraldehyde 3-phosphate: step 4/5. The chain is Enolase from Alligator mississippiensis (American alligator).